Reading from the N-terminus, the 439-residue chain is D-inositol 3-phosphate glycosyltransferase (439 aa).

His21 lines the 1D-myo-inositol 3-phosphate pocket. Residues 27-28 (QP) and Gly35 contribute to the UDP-N-acetyl-alpha-D-glucosamine site. 1D-myo-inositol 3-phosphate is bound by residues 32–37 (DAGGMN), Lys90, Tyr123, Thr147, and Arg167. Residues Arg241, Lys246, and Gln299 each coordinate UDP-N-acetyl-alpha-D-glucosamine. Mg(2+) contacts are provided by Tyr308, Arg309, and Ala311. Residues Glu321 and Glu329 each coordinate UDP-N-acetyl-alpha-D-glucosamine. Thr335 lines the Mg(2+) pocket.

Belongs to the glycosyltransferase group 1 family. MshA subfamily. As to quaternary structure, homodimer.

It carries out the reaction 1D-myo-inositol 3-phosphate + UDP-N-acetyl-alpha-D-glucosamine = 1D-myo-inositol 2-acetamido-2-deoxy-alpha-D-glucopyranoside 3-phosphate + UDP + H(+). Functionally, catalyzes the transfer of a N-acetyl-glucosamine moiety to 1D-myo-inositol 3-phosphate to produce 1D-myo-inositol 2-acetamido-2-deoxy-glucopyranoside 3-phosphate in the mycothiol biosynthesis pathway. The protein is D-inositol 3-phosphate glycosyltransferase of Mycobacterium sp. (strain KMS).